We begin with the raw amino-acid sequence, 364 residues long: BTB/POZ and TAZ domain-containing protein 2 (364 aa).

The region spanning 34 to 106 (SDVEIVTSDN…LYSSSLTEDE (73 aa)) is the BTB domain. A Nuclear localization signal motif is present at residues 203-212 (RKKRRRRHRK). The TAZ-type zinc-finger motif lies at 215–316 (DLYMQLSEAM…PDSCRVPLCR (102 aa)). The segment at 327–350 (KMGEDTKWKLLVTRVVSAKAMTSL) is caM-binding.

Interacts with CUL3A. Interacts with GTE11/BET10 through the BTB domain. As to expression, preferentially expressed in young leaves and roots.

The protein localises to the nucleus. The protein resides in the cytoplasm. It functions in the pathway protein modification; protein ubiquitination. In terms of biological role, may act as a substrate-specific adapter of an E3 ubiquitin-protein ligase complex (CUL3-RBX1-BTB) which mediates the ubiquitination and subsequent proteasomal degradation of target proteins. Plays a key role as a component of the TAC1-mediated telomerase activation pathway certainly by targeting a telomerase repressor to degradation. Seems to occupy an integral position in a complex signaling network that perceives, integrates, and responds to multiple, and sometimes competing, signals. Enhances responses to auxin in postgermination and vegetative development. Also negatively regulates ABA- and sugar-mediated inhibition of the germination. Essential for female and male gametophyte development. In Arabidopsis thaliana (Mouse-ear cress), this protein is BTB/POZ and TAZ domain-containing protein 2 (BT2).